We begin with the raw amino-acid sequence, 191 residues long: Inosine triphosphate pyrophosphatase (191 aa).

Residue 9-14 (TGNAKK) participates in ITP binding. Mg(2+) is bound at residue Glu-39. Residues Lys-51, 67 to 68 (DT), Lys-84, 143 to 146 (FGWD), Lys-166, and 171 to 172 (HR) contribute to the ITP site.

The protein belongs to the HAM1 NTPase family. Homodimer. The cofactor is Mg(2+). Requires Mn(2+) as cofactor.

Its subcellular location is the cytoplasm. It catalyses the reaction ITP + H2O = IMP + diphosphate + H(+). The catalysed reaction is dITP + H2O = dIMP + diphosphate + H(+). It carries out the reaction XTP + H2O = XMP + diphosphate + H(+). Pyrophosphatase that hydrolyzes non-canonical purine nucleotides such as inosine triphosphate (ITP), deoxyinosine triphosphate (dITP) or xanthosine 5'-triphosphate (XTP) to their respective monophosphate derivatives. The enzyme does not distinguish between the deoxy- and ribose forms. Probably excludes non-canonical purines from RNA and DNA precursor pools, thus preventing their incorporation into RNA and DNA and avoiding chromosomal lesions. The polypeptide is Inosine triphosphate pyrophosphatase (Drosophila melanogaster (Fruit fly)).